Here is a 273-residue protein sequence, read N- to C-terminus: WIMGHMVNSLAQMDEFVGLGSNSIETDVSFDKQANPEYTYHGVPCDCGRSCGHSTKFNDFLKGLRKATTPGDSKYHEKLILVVFDLKTGSLYDNQAYDAGTKLAKNLLQHYWNNGNNGGRAYIILSIPKLNHYKLITGFKETLKNEGHEDLLEKVGHDFSGNDDISEVQKTYNKAGVTGHVWQSDGITNCLLRGLSRVKAAVANRDSGRGIINKVYYWTVDKRSTTRDSLDAKVDGIMTNYPDITVEILNEDAYKTKFRIATYEDNPWETFKE.

Residue His5 is part of the active site. 2 residues coordinate Mg(2+): Glu25 and Asp27. The active-site Nucleophile is His41. 2 disulfides stabilise this stretch: Cys45–Cys51 and Cys47–Cys190. Asp85 is a Mg(2+) binding site.

This sequence belongs to the arthropod phospholipase D family. Class II subfamily. Mg(2+) serves as cofactor. In terms of tissue distribution, expressed by the venom gland.

The protein resides in the secreted. The catalysed reaction is an N-(acyl)-sphingosylphosphocholine = an N-(acyl)-sphingosyl-1,3-cyclic phosphate + choline. The enzyme catalyses an N-(acyl)-sphingosylphosphoethanolamine = an N-(acyl)-sphingosyl-1,3-cyclic phosphate + ethanolamine. It carries out the reaction a 1-acyl-sn-glycero-3-phosphocholine = a 1-acyl-sn-glycero-2,3-cyclic phosphate + choline. It catalyses the reaction a 1-acyl-sn-glycero-3-phosphoethanolamine = a 1-acyl-sn-glycero-2,3-cyclic phosphate + ethanolamine. Its function is as follows. Dermonecrotic toxins cleave the phosphodiester linkage between the phosphate and headgroup of certain phospholipids (sphingolipid and lysolipid substrates), forming an alcohol (often choline) and a cyclic phosphate. This toxin acts on sphingomyelin (SM). It may also act on ceramide phosphoethanolamine (CPE), lysophosphatidylcholine (LPC) and lysophosphatidylethanolamine (LPE), but not on lysophosphatidylserine (LPS), and lysophosphatidylglycerol (LPG). It acts by transphosphatidylation, releasing exclusively cyclic phosphate products as second products. Induces dermonecrosis, hemolysis, increased vascular permeability, edema, inflammatory response, and platelet aggregation. This is Dermonecrotic toxin LvSicTox-alphaIC1ai from Loxosceles variegata (Recluse spider).